The primary structure comprises 640 residues: MLSVLHKLKELRILSQGDYYFAKLIADKQCHTDYAEPVKNLAILLAALCSWRYTQGNTCSQLDRYLEHNLFGLAYRTTEEDYLAEIHEKIGYLPVEDWQNALCGHMAFTQDPVNQIAPMAFQFGALYFYRAWQDEYRIVQYIKNTLKKYRTLAFSYDEIHQKLEKYFPEKQEKTDWQKVAVATAIKSPFSIITGGPGTGKTTTVTRLLLVLQELFDCKLHIKLVAPTGKAASRLEESIKNALGFMQEKMNVSHSLFNAIPQKASTLHSLLGVNAFNDYTRYNSHNPLQLDVLVVDETSMIDLPMMAKLINALKPETRLILLGDQAQLASVEAGAVLGELAQFVTQPYSHEQAAYLLATTGYKVEGSDCSNPIRDCLCHLTESRRFDKDSGIGKLSEFIQKGKADDSLELFDHYPQELHFNSLNDEGDAVNQVVKSAVENYRTFLKMLDDLRKQKIDPNAKNEQGISYAEAIQVQFNSVRFLTALRNNNLGVENLNKEIALALREQKLLWFRNEQDWYIGKPIMITENDHNVRLYNGDIGLCLANGKVWFGNREVLTNRIPAHEPAFMMTIHKSQGSEFKHTVMVLPTEVNPVLSRELVFTGVTRAKKELTVFADEKIWKTAIRQTVKRQSGLGKLLEDLN.

194 to 201 (GGPGTGKT) contributes to the ATP binding site.

This sequence belongs to the RecD family. In terms of assembly, heterotrimer of RecB, RecC and RecD. All subunits contribute to DNA-binding.

The catalysed reaction is Couples ATP hydrolysis with the unwinding of duplex DNA at the replication fork by translocating in the 5'-3' direction. This creates two antiparallel DNA single strands (ssDNA). The leading ssDNA polymer is the template for DNA polymerase III holoenzyme which synthesizes a continuous strand.. The enzyme catalyses ATP + H2O = ADP + phosphate + H(+). Its function is as follows. A helicase/nuclease that prepares dsDNA breaks (DSB) for recombinational DNA repair. Binds to DSBs and unwinds DNA via a highly rapid and processive ATP-dependent bidirectional helicase activity. Unwinds dsDNA until it encounters a Chi (crossover hotspot instigator) sequence from the 3' direction. Cuts ssDNA a few nucleotides 3' to the Chi site. The properties and activities of the enzyme are changed at Chi. The Chi-altered holoenzyme produces a long 3'-ssDNA overhang and facilitates RecA-binding to the ssDNA for homologous DNA recombination and repair. Holoenzyme degrades any linearized DNA that is unable to undergo homologous recombination. In the holoenzyme this subunit has ssDNA-dependent ATPase and 5'-3' helicase activity. When added to pre-assembled RecBC greatly stimulates nuclease activity and augments holoenzyme processivity. Negatively regulates the RecA-loading ability of RecBCD. This is RecBCD enzyme subunit RecD from Haemophilus influenzae (strain ATCC 51907 / DSM 11121 / KW20 / Rd).